We begin with the raw amino-acid sequence, 340 residues long: Ketol-acid reductoisomerase (NADP(+)) (340 aa).

In terms of domain architecture, KARI N-terminal Rossmann spans 1–183; the sequence is MAITVYYDKD…GGGRTGIIET (183 aa). NADP(+) contacts are provided by residues 26–29, Arg49, Ser52, Ser54, and 84–87; these read FGSQ and DEIQ. His109 is a catalytic residue. Gly135 provides a ligand contact to NADP(+). Residues 184 to 329 enclose the KARI C-terminal knotted domain; that stretch reads TFKAETETDL…RNLRAMMPWI (146 aa). Positions 192, 196, 228, and 232 each coordinate Mg(2+). Substrate is bound at residue Ser253.

Belongs to the ketol-acid reductoisomerase family. Requires Mg(2+) as cofactor.

The enzyme catalyses (2R)-2,3-dihydroxy-3-methylbutanoate + NADP(+) = (2S)-2-acetolactate + NADPH + H(+). It carries out the reaction (2R,3R)-2,3-dihydroxy-3-methylpentanoate + NADP(+) = (S)-2-ethyl-2-hydroxy-3-oxobutanoate + NADPH + H(+). Its pathway is amino-acid biosynthesis; L-isoleucine biosynthesis; L-isoleucine from 2-oxobutanoate: step 2/4. The protein operates within amino-acid biosynthesis; L-valine biosynthesis; L-valine from pyruvate: step 2/4. In terms of biological role, involved in the biosynthesis of branched-chain amino acids (BCAA). Catalyzes an alkyl-migration followed by a ketol-acid reduction of (S)-2-acetolactate (S2AL) to yield (R)-2,3-dihydroxy-isovalerate. In the isomerase reaction, S2AL is rearranged via a Mg-dependent methyl migration to produce 3-hydroxy-3-methyl-2-ketobutyrate (HMKB). In the reductase reaction, this 2-ketoacid undergoes a metal-dependent reduction by NADPH to yield (R)-2,3-dihydroxy-isovalerate. This chain is Ketol-acid reductoisomerase (NADP(+)), found in Campylobacter jejuni subsp. jejuni serotype O:23/36 (strain 81-176).